The chain runs to 285 residues: Bifunctional protein FolD (285 aa).

Residues 165–167 (GRS), Ser-190, and Ile-231 contribute to the NADP(+) site.

Belongs to the tetrahydrofolate dehydrogenase/cyclohydrolase family. In terms of assembly, homodimer.

It catalyses the reaction (6R)-5,10-methylene-5,6,7,8-tetrahydrofolate + NADP(+) = (6R)-5,10-methenyltetrahydrofolate + NADPH. The enzyme catalyses (6R)-5,10-methenyltetrahydrofolate + H2O = (6R)-10-formyltetrahydrofolate + H(+). It participates in one-carbon metabolism; tetrahydrofolate interconversion. Its function is as follows. Catalyzes the oxidation of 5,10-methylenetetrahydrofolate to 5,10-methenyltetrahydrofolate and then the hydrolysis of 5,10-methenyltetrahydrofolate to 10-formyltetrahydrofolate. The polypeptide is Bifunctional protein FolD (Magnetococcus marinus (strain ATCC BAA-1437 / JCM 17883 / MC-1)).